Here is a 585-residue protein sequence, read N- to C-terminus: Cytochrome c lysine N-methyltransferase 1 (585 aa).

The 256-residue stretch at Lys-18–Ser-273 folds into the SET domain. The segment at Leu-186–Thr-288 is SET-like.

The protein belongs to the class V-like SAM-binding methyltransferase superfamily.

The protein resides in the cytoplasm. It is found in the cytosol. The catalysed reaction is L-lysyl-[cytochrome c] + S-adenosyl-L-methionine = N(6)-methyl-L-lysyl-[cytochrome c] + S-adenosyl-L-homocysteine + H(+). Methyltransferase which mediates trimethylation of 'Lys-78' of cytochrome c (CYC1). The protein is Cytochrome c lysine N-methyltransferase 1 (CTM1) of Saccharomyces cerevisiae (strain ATCC 204508 / S288c) (Baker's yeast).